A 75-amino-acid polypeptide reads, in one-letter code: Exodeoxyribonuclease 7 small subunit (75 aa).

Belongs to the XseB family. Heterooligomer composed of large and small subunits.

It is found in the cytoplasm. The enzyme catalyses Exonucleolytic cleavage in either 5'- to 3'- or 3'- to 5'-direction to yield nucleoside 5'-phosphates.. In terms of biological role, bidirectionally degrades single-stranded DNA into large acid-insoluble oligonucleotides, which are then degraded further into small acid-soluble oligonucleotides. This is Exodeoxyribonuclease 7 small subunit from Listeria monocytogenes serotype 4b (strain CLIP80459).